Consider the following 140-residue polypeptide: Hemoglobin subunit alpha-D (140 aa).

Positions 1–140 (MLTDSDKKLV…VCTVLAEKYR (140 aa)) constitute a Globin domain. H57 and H86 together coordinate heme b.

The protein belongs to the globin family. In terms of assembly, heterotetramer of two alpha-D chains and two beta chains. As to expression, red blood cells.

Involved in oxygen transport from the lung to the various peripheral tissues. The polypeptide is Hemoglobin subunit alpha-D (HBAD) (Columba livia (Rock dove)).